The sequence spans 365 residues: Outer capsid protein sigma-3 (365 aa).

The segment at 51–73 (CMHCLGVVGSLQRKLKHLPHHKC) adopts a CCHC-type zinc-finger fold.

The protein belongs to the orthoreovirus sigma-3 protein family. Heterohexamer of three sigma-3 and three Mu-1 proteins. The RNA-binding form is probably a homodimer. In terms of processing, cleaved during virus the endosomal proteolytic disassembly of the outer capsid.

The protein localises to the virion. It localises to the host cytoplasm. Its subcellular location is the host nucleus. In terms of biological role, stimulates translation by blocking the activation of the dsRNA-dependent protein kinase EIF2AK2/PKR, thereby inhibiting the host interferon response. Sigma3 prevents the activation of EIF2AK2 by competing with the kinase for dsRNA-binding. Its function is as follows. The viral outer shell polypeptides, of which sigma-3 is one, impose structural constraints that prevent elongation of nascent transcripts by the RNA-dependent RNA polymerase lambda-3. This Mammalia (T2J) protein is Outer capsid protein sigma-3 (S4).